The chain runs to 194 residues: Large ribosomal subunit protein bL25 (194 aa).

It belongs to the bacterial ribosomal protein bL25 family. CTC subfamily. In terms of assembly, part of the 50S ribosomal subunit; part of the 5S rRNA/L5/L18/L25 subcomplex. Contacts the 5S rRNA. Binds to the 5S rRNA independently of L5 and L18.

This is one of the proteins that binds to the 5S RNA in the ribosome where it forms part of the central protuberance. The sequence is that of Large ribosomal subunit protein bL25 from Geobacter sulfurreducens (strain ATCC 51573 / DSM 12127 / PCA).